The following is a 77-amino-acid chain: Acyl carrier protein (77 aa).

The 76-residue stretch at 2–77 folds into the Carrier domain; sequence STIEERVKKI…EAIDYVVSHQ (76 aa). Position 37 is an O-(pantetheine 4'-phosphoryl)serine (Ser37).

Belongs to the acyl carrier protein (ACP) family. Post-translationally, 4'-phosphopantetheine is transferred from CoA to a specific serine of apo-ACP by AcpS. This modification is essential for activity because fatty acids are bound in thioester linkage to the sulfhydryl of the prosthetic group.

It localises to the cytoplasm. The protein operates within lipid metabolism; fatty acid biosynthesis. Carrier of the growing fatty acid chain in fatty acid biosynthesis. This chain is Acyl carrier protein, found in Oceanospirillum linum.